The sequence spans 88 residues: Small ribosomal subunit protein uS17 (88 aa).

It belongs to the universal ribosomal protein uS17 family. In terms of assembly, part of the 30S ribosomal subunit.

One of the primary rRNA binding proteins, it binds specifically to the 5'-end of 16S ribosomal RNA. The sequence is that of Small ribosomal subunit protein uS17 from Syntrophotalea carbinolica (strain DSM 2380 / NBRC 103641 / GraBd1) (Pelobacter carbinolicus).